Reading from the N-terminus, the 142-residue chain is Large ribosomal subunit protein bL19 (142 aa).

Belongs to the bacterial ribosomal protein bL19 family.

Its function is as follows. This protein is located at the 30S-50S ribosomal subunit interface and may play a role in the structure and function of the aminoacyl-tRNA binding site. This chain is Large ribosomal subunit protein bL19, found in Rickettsia bellii (strain OSU 85-389).